A 149-amino-acid polypeptide reads, in one-letter code: uncharacterized protein (149 aa).

Residues H111–F140 are a coiled coil.

This is an uncharacterized protein from Aquifex aeolicus (strain VF5).